Consider the following 314-residue polypeptide: Ribonuclease Z (314 aa).

Zn(2+)-binding residues include His62, His64, Asp66, His67, His139, Asp210, and His268. The active-site Proton acceptor is Asp66.

The protein belongs to the RNase Z family. In terms of assembly, homodimer. Requires Zn(2+) as cofactor.

The enzyme catalyses Endonucleolytic cleavage of RNA, removing extra 3' nucleotides from tRNA precursor, generating 3' termini of tRNAs. A 3'-hydroxy group is left at the tRNA terminus and a 5'-phosphoryl group is left at the trailer molecule.. In terms of biological role, zinc phosphodiesterase, which displays some tRNA 3'-processing endonuclease activity. Probably involved in tRNA maturation, by removing a 3'-trailer from precursor tRNA. The polypeptide is Ribonuclease Z (Acaryochloris marina (strain MBIC 11017)).